Here is an 845-residue protein sequence, read N- to C-terminus: Receptor-like protein Cf-9 homolog (845 aa).

The N-terminal stretch at 1–19 is a signal peptide; it reads MGCVKLVFFMLLKLDLLEF. The interval 20–70 is N-cap; it reads KNMFTVNPNASDYCYDYTDQRMQSYPRTLFWNKSTDCCSWDGIHCDETTGQ. The Extracellular segment spans residues 20–794; the sequence is KNMFTVNPNA…EEDSPMISWQ (775 aa). N-linked (GlcNAc...) asparagine glycosylation is found at asparagine 28, asparagine 51, and asparagine 88. The LRR 1; degenerate repeat unit spans residues 71 to 94; that stretch reads VVELDLRCSQLQGKFHSNSSLFQL. LRR repeat units follow at residues 95-118, 119-143, 144-171, 172-193, 194-217, 219-242, 244-266, 267-291, 292-316, 318-338, 340-364, 365-388, 390-410, 411-434, 436-458, 459-482, 484-506, 507-531, 532-554, 555-579, 581-605, 649-672, 673-696, 698-721, and 723-741; these read SNLK…KFGE, FSDL…ISHL, SKLH…LKNL, TQLR…SNFS, SHLT…VFHL, DLEF…KWNS, ASLM…SFSH, LTSL…LWNL, TNIE…RFEK, KRLS…SFNR, WTQL…VSGL, QNLG…IFSL, SLVV…EFKS, KTLS…LLNQ, SLQF…ICNL, KTLM…VGER, EYLL…TFSI, GNSF…LINC, KYLK…WLGY, LSQL…GSTN, FMRL…ILGN, LDSN…IIGD, LVGL…SFQN, SVLE…LASL, and FLEV…IPKG. N-linked (GlcNAc...) asparagine glycosylation is found at asparagine 131, asparagine 170, asparagine 183, and asparagine 191. Asparagine 241 is a glycosylation site (N-linked (GlcNAc...) asparagine). N-linked (GlcNAc...) asparagine glycans are attached at residues asparagine 279 and asparagine 290. Residues asparagine 337, asparagine 360, asparagine 378, and asparagine 398 are each glycosylated (N-linked (GlcNAc...) asparagine). An N-linked (GlcNAc...) asparagine glycan is attached at asparagine 446. Asparagine 501 is a glycosylation site (N-linked (GlcNAc...) asparagine). Asparagine 545 carries an N-linked (GlcNAc...) asparagine glycan. N-linked (GlcNAc...) asparagine glycosylation is found at asparagine 656, asparagine 680, and asparagine 696. N-linked (GlcNAc...) asparagine glycosylation is found at asparagine 728 and asparagine 749. The interval 742 to 794 is C-cap/acidic domain; sequence KQFDSFGNTSYQGNDGLRGFPLSKLCGVDDQVTTPAELDQEEEEEDSPMISWQ. Residues 795 to 815 form a helical membrane-spanning segment; it reads GVLVGYGCGLVIGLSVIYIMW. At 816–845 the chain is on the cytoplasmic side; sequence STQYPAWFSRMDLKLEHIITTRMKKHKKRY.

This sequence belongs to the RLP family.

Its subcellular location is the cell membrane. At the opposite of its homolog Cf-9 found in S.pimpinellifolium, was not able to confer resistance to the fungal pathogen C.fulvum. The chain is Receptor-like protein Cf-9 homolog from Solanum lycopersicum (Tomato).